The sequence spans 318 residues: Probable cell division protein WhiA (318 aa).

The H-T-H motif DNA-binding region spans 281–314 (SLKELGQMLVPPVGKSGVNHRLRKIEEISKKLKE).

The protein belongs to the WhiA family.

In terms of biological role, involved in cell division and chromosome segregation. In Thermoanaerobacter pseudethanolicus (strain ATCC 33223 / 39E) (Clostridium thermohydrosulfuricum), this protein is Probable cell division protein WhiA.